The primary structure comprises 181 residues: ATP synthase subunit b (181 aa).

The chain crosses the membrane as a helical span at residues 12–32 (LPAVYDIVWSAVVFVVLLVVI).

It belongs to the ATPase B chain family. As to quaternary structure, F-type ATPases have 2 components, F(1) - the catalytic core - and F(0) - the membrane proton channel. F(1) has five subunits: alpha(3), beta(3), gamma(1), delta(1), epsilon(1). F(0) has three main subunits: a(1), b(2) and c(10-14). The alpha and beta chains form an alternating ring which encloses part of the gamma chain. F(1) is attached to F(0) by a central stalk formed by the gamma and epsilon chains, while a peripheral stalk is formed by the delta and b chains.

The protein localises to the cell membrane. Its function is as follows. F(1)F(0) ATP synthase produces ATP from ADP in the presence of a proton or sodium gradient. F-type ATPases consist of two structural domains, F(1) containing the extramembraneous catalytic core and F(0) containing the membrane proton channel, linked together by a central stalk and a peripheral stalk. During catalysis, ATP synthesis in the catalytic domain of F(1) is coupled via a rotary mechanism of the central stalk subunits to proton translocation. Component of the F(0) channel, it forms part of the peripheral stalk, linking F(1) to F(0). The protein is ATP synthase subunit b of Clavibacter sepedonicus (Clavibacter michiganensis subsp. sepedonicus).